A 294-amino-acid polypeptide reads, in one-letter code: Elongation factor Ts (294 aa).

The interval 78-81 (TDFV) is involved in Mg(2+) ion dislocation from EF-Tu.

The protein belongs to the EF-Ts family.

The protein localises to the cytoplasm. In terms of biological role, associates with the EF-Tu.GDP complex and induces the exchange of GDP to GTP. It remains bound to the aminoacyl-tRNA.EF-Tu.GTP complex up to the GTP hydrolysis stage on the ribosome. This is Elongation factor Ts from Mycoplasma mobile (strain ATCC 43663 / 163K / NCTC 11711) (Mesomycoplasma mobile).